The following is an 806-amino-acid chain: Leucine--tRNA ligase (806 aa).

A 'HIGH' region motif is present at residues 40–51 (PYPSGKGLHVGH). The 'KMSKS' region signature appears at 580–584 (KMSKS). Lys-583 contacts ATP.

The protein belongs to the class-I aminoacyl-tRNA synthetase family.

It is found in the cytoplasm. It carries out the reaction tRNA(Leu) + L-leucine + ATP = L-leucyl-tRNA(Leu) + AMP + diphosphate. This Ureaplasma parvum serovar 3 (strain ATCC 27815 / 27 / NCTC 11736) protein is Leucine--tRNA ligase.